Here is a 727-residue protein sequence, read N- to C-terminus: Epithelial splicing regulatory protein 2 (727 aa).

A disordered region spans residues 1-22 (MTPPPPPPPPPGPDPAADPAAD). The residue at position 83 (serine 83) is a Phosphoserine. 3 RRM domains span residues 257–353 (TVVR…RFLS), 358–438 (VILR…RSTA), and 475–555 (DCVR…PCST). Serine 573 is subject to Phosphoserine.

Belongs to the ESRP family. In terms of assembly, interacts with RBPMS. As to expression, epithelial cell-specific.

Its subcellular location is the nucleus. MRNA splicing factor that regulates the formation of epithelial cell-specific isoforms. Specifically regulates the expression of FGFR2-IIIb, an epithelial cell-specific isoform of FGFR2. Also regulates the splicing of CD44, CTNND1, ENAH, 3 transcripts that undergo changes in splicing during the epithelial-to-mesenchymal transition (EMT). Acts by directly binding specific sequences in mRNAs. Binds the GU-rich sequence motifs in the ISE/ISS-3, a cis-element regulatory region present in the mRNA of FGFR2. The protein is Epithelial splicing regulatory protein 2 (ESRP2) of Homo sapiens (Human).